The chain runs to 492 residues: Probable sphingolipid transporter spinster homolog 1 (492 aa).

Residues Phe-29–Ser-49 form a helical membrane-spanning segment. Residues Asn-53 and Asn-76 are each glycosylated (N-linked (GlcNAc...) asparagine). Transmembrane regions (helical) follow at residues Gly-83–Leu-103, Val-119–Phe-139, Met-141–Ser-161, Phe-169–Gly-189, Trp-200–Lys-220, Val-279–Tyr-299, and Ile-317–Leu-337. Asn-341 carries N-linked (GlcNAc...) asparagine glycosylation. The next 4 membrane-spanning stretches (helical) occupy residues Phe-348–Met-368, Tyr-372–Val-392, Leu-407–Leu-427, and Thr-442–Met-462. Residue Ser-472 is modified to Phosphoserine. The segment covering Ser-472–Lys-481 has biased composition (acidic residues). The tract at residues Ser-472 to Ala-492 is disordered. A glycan (N-linked (GlcNAc...) asparagine) is linked at Asn-488.

The protein belongs to the major facilitator superfamily. Spinster (TC 2.A.1.49) family.

It localises to the late endosome membrane. The protein resides in the lysosome membrane. Functionally, probable sphingolipid transporter that plays a central role in endosomes and/or lysosomes storage. In Arabidopsis thaliana (Mouse-ear cress), this protein is Probable sphingolipid transporter spinster homolog 1.